The primary structure comprises 161 residues: DNA-directed RNA polymerase 18 kDa subunit (161 aa).

Belongs to the poxviridae DNA-directed RNA polymerase 18 kDa subunit family. As to quaternary structure, the DNA-dependent RNA polymerase used for intermediate and late genes expression consists of eight subunits Rpo30/OPG66, Rpo7/OPG90, Rpo22/OPG103, Rpo147/OPG105, Rpo18/OPG119, Rpo19/OPG131, Rpo132/OPG151 and Rpo35/OPG156. The same holoenzyme, with the addition of the transcription-specificity factor OPG109, is used for early gene expression.

Its subcellular location is the virion. It carries out the reaction RNA(n) + a ribonucleoside 5'-triphosphate = RNA(n+1) + diphosphate. In terms of biological role, part of the DNA-dependent RNA polymerase which catalyzes the transcription of viral DNA into RNA using the four ribonucleoside triphosphates as substrates. Responsible for the transcription of early, intermediate and late genes. DNA-dependent RNA polymerase associates with the early transcription factor (ETF), itself composed of OPG118 and OPG133, thereby allowing the early genes transcription. Late transcription, and probably also intermediate transcription, require newly synthesized RNA polymerase. This chain is DNA-directed RNA polymerase 18 kDa subunit (OPG119), found in Vaccinia virus (strain Ankara) (VACV).